Consider the following 393-residue polypeptide: 4-hydroxyphenylpyruvate dioxygenase (393 aa).

T2 carries the post-translational modification N-acetylthreonine. VOC domains lie at H18–F152 and I180–K338. H183 serves as a coordination point for Fe cation. Phosphoserine is present on residues S211, S226, and S250. Residues H266 and E349 each coordinate Fe cation.

The protein belongs to the 4HPPD family. Homodimer. Requires Fe cation as cofactor. Liver.

The protein resides in the cytoplasm. Its subcellular location is the endoplasmic reticulum membrane. It localises to the golgi apparatus membrane. It catalyses the reaction 3-(4-hydroxyphenyl)pyruvate + O2 = homogentisate + CO2. The protein operates within amino-acid degradation; L-phenylalanine degradation; acetoacetate and fumarate from L-phenylalanine: step 3/6. Functionally, catalyzes the conversion of 4-hydroxyphenylpyruvic acid to homogentisic acid, one of the steps in tyrosine catabolism. The polypeptide is 4-hydroxyphenylpyruvate dioxygenase (HPD) (Sus scrofa (Pig)).